The primary structure comprises 277 residues: MAIHLYKTSTPSTRNGAVDSQAKSNTRNTRKNLIYGQHRCGKGRNARGIITARHRGGGHKRLYRKIDFRRNEKDIYGRIVTIEYDPNRNAYICLIHYGDGEKRYILHPRGAIIGDTIISGTEVPIKMGNALPLTDMPLGTAIHNIEITLGKGGQLARAAGAVAKLIAKEGKSATLKLPSGEVRLISKNCSATVGQVGNTGVNQKSLGRAGSKCWLGKRPVVRGVVMNPVDHPHGGGEGRAPIGRKKPATPWGYPALGRRSRKRNKYSDNLILRRRSK.

Disordered regions lie at residues 1–31 and 227–277; these read MAIH…NTRK and NPVD…RRSK.

This sequence belongs to the universal ribosomal protein uL2 family. As to quaternary structure, part of the 50S ribosomal subunit.

Its subcellular location is the plastid. The protein localises to the chloroplast. This chain is Large ribosomal subunit protein uL2cz/uL2cy (rpl2-A), found in Manihot esculenta (Cassava).